The following is a 204-amino-acid chain: Redox-sensing transcriptional repressor Rex 2 (204 aa).

Positions 17–53 form a DNA-binding region, H-T-H motif; the sequence is MYRKVLEATKKPYISSDEIARFLEINPDLVRKDFSYL.

The protein belongs to the transcriptional regulatory Rex family. In terms of assembly, homodimer.

Its subcellular location is the cytoplasm. Functionally, modulates transcription in response to changes in cellular NADH/NAD(+) redox state. The sequence is that of Redox-sensing transcriptional repressor Rex 2 (rex2) from Thermotoga maritima (strain ATCC 43589 / DSM 3109 / JCM 10099 / NBRC 100826 / MSB8).